Consider the following 333-residue polypeptide: Probable xyloglucan endotransglucosylase/hydrolase protein 27 (333 aa).

The signal sequence occupies residues 1-20 (METLSRLLVFMSLFSGLVSG). The region spanning 21 to 223 (FALQNLPITS…YKYAPYIARF (203 aa)) is the GH16 domain. Residue glutamate 108 is the Nucleophile of the active site. The active-site Proton donor is glutamate 112. Residues glutamate 112 and 125-127 (QTN) contribute to the xyloglucan site. N-linked (GlcNAc...) asparagine glycosylation occurs at asparagine 131. Xyloglucan contacts are provided by residues 135–139 (HSGRE), 202–203 (KW), glycine 207, and arginine 282. An intrachain disulfide couples cysteine 277 to cysteine 290. A disordered region spans residues 311 to 333 (IPRRHRNGKHRSKRSRVDGTESI). Residues 312 to 324 (PRRHRNGKHRSKR) show a composition bias toward basic residues.

Belongs to the glycosyl hydrolase 16 family. XTH group 3 subfamily. In terms of processing, contains at least one intrachain disulfide bond essential for its enzymatic activity. In terms of tissue distribution, expressed in 7 day old seedlings, roots, hypocotyls, rosette leaves, internodes between nodes bearing axillary shoots, nodes bearing flowers, flower buds, anthers and siliques.

The protein localises to the secreted. The protein resides in the cell wall. It is found in the extracellular space. It localises to the apoplast. The enzyme catalyses breaks a beta-(1-&gt;4) bond in the backbone of a xyloglucan and transfers the xyloglucanyl segment on to O-4 of the non-reducing terminal glucose residue of an acceptor, which can be a xyloglucan or an oligosaccharide of xyloglucan.. Catalyzes xyloglucan endohydrolysis (XEH) and/or endotransglycosylation (XET). Cleaves and religates xyloglucan polymers, an essential constituent of the primary cell wall, and thereby participates in cell wall construction of growing tissues. Required for cell wall modification during the development of tracheary elements. In Arabidopsis thaliana (Mouse-ear cress), this protein is Probable xyloglucan endotransglucosylase/hydrolase protein 27 (XTH27).